The following is a 206-amino-acid chain: Ribosomal RNA small subunit methyltransferase G (206 aa).

S-adenosyl-L-methionine-binding positions include glycine 74, leucine 79, 125-126 (VE), and arginine 140.

This sequence belongs to the methyltransferase superfamily. RNA methyltransferase RsmG family.

It localises to the cytoplasm. It catalyses the reaction guanosine(527) in 16S rRNA + S-adenosyl-L-methionine = N(7)-methylguanosine(527) in 16S rRNA + S-adenosyl-L-homocysteine. Specifically methylates the N7 position of guanine in position 527 of 16S rRNA. This chain is Ribosomal RNA small subunit methyltransferase G, found in Shewanella sp. (strain MR-7).